The primary structure comprises 292 residues: GTP cyclohydrolase FolE2 (292 aa).

Belongs to the GTP cyclohydrolase IV family.

It catalyses the reaction GTP + H2O = 7,8-dihydroneopterin 3'-triphosphate + formate + H(+). It functions in the pathway cofactor biosynthesis; 7,8-dihydroneopterin triphosphate biosynthesis; 7,8-dihydroneopterin triphosphate from GTP: step 1/1. Converts GTP to 7,8-dihydroneopterin triphosphate. In Staphylococcus saprophyticus subsp. saprophyticus (strain ATCC 15305 / DSM 20229 / NCIMB 8711 / NCTC 7292 / S-41), this protein is GTP cyclohydrolase FolE2.